We begin with the raw amino-acid sequence, 192 residues long: UPF0312 protein Psyr_0457 (192 aa).

The N-terminal stretch at 1-23 is a signal peptide; the sequence is MLKKSLAALALGTALLSAGQAMA.

This sequence belongs to the UPF0312 family. Type 1 subfamily.

Its subcellular location is the periplasm. This chain is UPF0312 protein Psyr_0457, found in Pseudomonas syringae pv. syringae (strain B728a).